Reading from the N-terminus, the 175-residue chain is Ribosome maturation factor RimM (175 aa).

The region spanning 99–172 (ADEYHVSDLI…RLEVDAPPGL (74 aa)) is the PRC barrel domain.

Belongs to the RimM family. In terms of assembly, binds ribosomal protein uS19.

Its subcellular location is the cytoplasm. Its function is as follows. An accessory protein needed during the final step in the assembly of 30S ribosomal subunit, possibly for assembly of the head region. Essential for efficient processing of 16S rRNA. May be needed both before and after RbfA during the maturation of 16S rRNA. It has affinity for free ribosomal 30S subunits but not for 70S ribosomes. This is Ribosome maturation factor RimM from Picosynechococcus sp. (strain ATCC 27264 / PCC 7002 / PR-6) (Agmenellum quadruplicatum).